Consider the following 527-residue polypeptide: Bifunctional purine biosynthesis protein PurH (527 aa).

Residues 1 to 149 (MASDFLPVRR…KNFARVAVAT (149 aa)) enclose the MGS-like domain.

The protein belongs to the PurH family.

It catalyses the reaction (6R)-10-formyltetrahydrofolate + 5-amino-1-(5-phospho-beta-D-ribosyl)imidazole-4-carboxamide = 5-formamido-1-(5-phospho-D-ribosyl)imidazole-4-carboxamide + (6S)-5,6,7,8-tetrahydrofolate. The enzyme catalyses IMP + H2O = 5-formamido-1-(5-phospho-D-ribosyl)imidazole-4-carboxamide. It functions in the pathway purine metabolism; IMP biosynthesis via de novo pathway; 5-formamido-1-(5-phospho-D-ribosyl)imidazole-4-carboxamide from 5-amino-1-(5-phospho-D-ribosyl)imidazole-4-carboxamide (10-formyl THF route): step 1/1. Its pathway is purine metabolism; IMP biosynthesis via de novo pathway; IMP from 5-formamido-1-(5-phospho-D-ribosyl)imidazole-4-carboxamide: step 1/1. In Xanthomonas campestris pv. campestris (strain 8004), this protein is Bifunctional purine biosynthesis protein PurH.